The chain runs to 386 residues: Flap endonuclease 1 (386 aa).

The segment at 1–104 (MGILGLSKLI…GELAKRAERR (104 aa)) is N-domain. D34 contributes to the Mg(2+) binding site. DNA is bound by residues R47 and R70. Residues D86, E158, E160, D179, and D181 each coordinate Mg(2+). The tract at residues 122–253 (EIEKFNRRLV…KRAIELINNY (132 aa)) is I-domain. E158 serves as a coordination point for DNA. Positions 231 and 233 each coordinate DNA. D233 contributes to the Mg(2+) binding site. Residues 336–344 (TQVRLDSFF) are interaction with PCNA. Positions 354-386 (VNAAKRKAEEAKKSANNKKAKTSGGAARGRRPK) are disordered.

The protein belongs to the XPG/RAD2 endonuclease family. FEN1 subfamily. In terms of assembly, interacts with PCNA. Three molecules of FEN1 bind to one PCNA trimer with each molecule binding to one PCNA monomer. PCNA stimulates the nuclease activity without altering cleavage specificity. Mg(2+) is required as a cofactor. Phosphorylated. Phosphorylation upon DNA damage induces relocalization to the nuclear plasma.

The protein resides in the nucleus. The protein localises to the nucleolus. Its subcellular location is the nucleoplasm. It localises to the mitochondrion. Its function is as follows. Structure-specific nuclease with 5'-flap endonuclease and 5'-3' exonuclease activities involved in DNA replication and repair. During DNA replication, cleaves the 5'-overhanging flap structure that is generated by displacement synthesis when DNA polymerase encounters the 5'-end of a downstream Okazaki fragment. It enters the flap from the 5'-end and then tracks to cleave the flap base, leaving a nick for ligation. Also involved in the long patch base excision repair (LP-BER) pathway, by cleaving within the apurinic/apyrimidinic (AP) site-terminated flap. Acts as a genome stabilization factor that prevents flaps from equilibrating into structures that lead to duplications and deletions. Also possesses 5'-3' exonuclease activity on nicked or gapped double-stranded DNA, and exhibits RNase H activity. Also involved in replication and repair of rDNA and in repairing mitochondrial DNA. The sequence is that of Flap endonuclease 1 from Drosophila pseudoobscura pseudoobscura (Fruit fly).